A 442-amino-acid chain; its full sequence is UPF0489 protein C5orf22 homolog (442 aa).

Residues Ser-175–Thr-208 are disordered. Residues Asn-189–Glu-200 show a composition bias toward polar residues.

Belongs to the UPF0489 family.

This Pongo abelii (Sumatran orangutan) protein is UPF0489 protein C5orf22 homolog.